Consider the following 268-residue polypeptide: Octanoyltransferase (268 aa).

The region spanning 73 to 261 is the BPL/LPL catalytic domain; it reads GEADELVWLL…AFEEVFGPAV (189 aa). Residues 112–119, 192–194, and 205–207 each bind substrate; these read RGGEYTYH, ALG, and GLS. Cys-223 functions as the Acyl-thioester intermediate in the catalytic mechanism.

Belongs to the LipB family.

It is found in the cytoplasm. It catalyses the reaction octanoyl-[ACP] + L-lysyl-[protein] = N(6)-octanoyl-L-lysyl-[protein] + holo-[ACP] + H(+). It functions in the pathway protein modification; protein lipoylation via endogenous pathway; protein N(6)-(lipoyl)lysine from octanoyl-[acyl-carrier-protein]: step 1/2. Catalyzes the transfer of endogenously produced octanoic acid from octanoyl-acyl-carrier-protein onto the lipoyl domains of lipoate-dependent enzymes. Lipoyl-ACP can also act as a substrate although octanoyl-ACP is likely to be the physiological substrate. The chain is Octanoyltransferase from Agrobacterium fabrum (strain C58 / ATCC 33970) (Agrobacterium tumefaciens (strain C58)).